The chain runs to 421 residues: RNase J-like protein (421 aa).

Zn(2+) contacts are provided by histidine 55, histidine 57, aspartate 59, histidine 60, histidine 132, aspartate 153, and histidine 389.

The protein belongs to the metallo-beta-lactamase superfamily. RNA-metabolizing metallo-beta-lactamase-like family. As to quaternary structure, forms homodimers on heating to 60 degrees Celsius which may be the active form. Zn(2+) is required as a cofactor.

With respect to regulation, inhibited by imidazole. Functionally, a 5'-3' exoribonuclease with a strong reference for 5'-monophosphorylated RNA and no endoribonuclease activty. The chain is RNase J-like protein from Methanocaldococcus jannaschii (strain ATCC 43067 / DSM 2661 / JAL-1 / JCM 10045 / NBRC 100440) (Methanococcus jannaschii).